A 288-amino-acid polypeptide reads, in one-letter code: Formamidopyrimidine-DNA glycosylase (288 aa).

The Schiff-base intermediate with DNA role is filled by Pro-2. Residue Glu-3 is the Proton donor of the active site. Lys-59 (proton donor; for beta-elimination activity) is an active-site residue. The DNA site is built by His-93, Arg-112, and Lys-168. The segment at 254–288 (NVYGRGGEPCKRCGAPIKRVVVGGRSTHYCATCQR) adopts an FPG-type zinc-finger fold. The active-site Proton donor; for delta-elimination activity is the Arg-278.

It belongs to the FPG family. Monomer. The cofactor is Zn(2+).

It carries out the reaction Hydrolysis of DNA containing ring-opened 7-methylguanine residues, releasing 2,6-diamino-4-hydroxy-5-(N-methyl)formamidopyrimidine.. It catalyses the reaction 2'-deoxyribonucleotide-(2'-deoxyribose 5'-phosphate)-2'-deoxyribonucleotide-DNA = a 3'-end 2'-deoxyribonucleotide-(2,3-dehydro-2,3-deoxyribose 5'-phosphate)-DNA + a 5'-end 5'-phospho-2'-deoxyribonucleoside-DNA + H(+). In terms of biological role, involved in base excision repair of DNA damaged by oxidation or by mutagenic agents. Acts as a DNA glycosylase that recognizes and removes damaged bases. Has a preference for oxidized purines, such as 7,8-dihydro-8-oxoguanine (8-oxoG). Has AP (apurinic/apyrimidinic) lyase activity and introduces nicks in the DNA strand. Cleaves the DNA backbone by beta-delta elimination to generate a single-strand break at the site of the removed base with both 3'- and 5'-phosphates. In Corynebacterium jeikeium (strain K411), this protein is Formamidopyrimidine-DNA glycosylase.